Reading from the N-terminus, the 333-residue chain is NADH dehydrogenase (ubiquinone) complex I, assembly factor 6 (333 aa).

The N-terminal 44 residues, 1 to 44 (MAASAHGSVWGPLRLGIPGLCCRRPPLGLYARMRRLPGPEVSGR), are a transit peptide targeting the mitochondrion.

This sequence belongs to the NDUFAF6 family. In terms of tissue distribution, widely expressed. A lower expression is observed in lung and kidney compared to heart, muscle and liver. In the kidney, expression is high in the basal zone of the proximal tubular cells.

It localises to the mitochondrion inner membrane. The protein resides in the cytoplasm. Its subcellular location is the nucleus. Its function is as follows. Involved in the assembly of mitochondrial NADH:ubiquinone oxidoreductase complex (complex I) at early stages. May play a role in the biogenesis of complex I subunit MT-ND1. The polypeptide is NADH dehydrogenase (ubiquinone) complex I, assembly factor 6 (NDUFAF6) (Homo sapiens (Human)).